The sequence spans 516 residues: Flavin-dependent halogenase armH2 (516 aa).

The FAD site is built by glycine 16, alanine 19, and glutamate 49. The chloride site is built by serine 328 and glycine 329. An FAD-binding site is contributed by isoleucine 330. The segment at proline 440–glutamate 475 is disordered.

The protein belongs to the flavin-dependent halogenase family.

The enzyme catalyses melleolide F + FADH2 + chloride + O2 = 6'-chloromelleolide F + FAD + 2 H2O + H(+). Functionally, flavin-dependent halogenase involved in the biosynthesis of melleolides, a range of antifungal and phytotoxic polyketide derivatives composed of an orsellinic acid (OA) moiety esterified to various sesquiterpene alcohols. The halogenase catalyzes the transfer of a single chlorine atom to the melleolide backbone, resulting in a 6'-chloromelleolide product. The enzyme acts on free substrate and does not depend on carrier-protein-dependent acceptor molecules. The polypeptide is Flavin-dependent halogenase armH2 (Armillaria mellea (Honey mushroom)).